The following is a 358-amino-acid chain: Ornithine cyclodeaminase (358 aa).

Residues R52 and K76 each contribute to the L-ornithine site. NAD(+) is bound by residues T91, R119, A146–Q147, D168, T208, V231–D234, K238, and S299. L-ornithine is bound at residue R119. L-ornithine is bound at residue D234. Catalysis depends on D234, which acts as the Proton donor/acceptor. L-ornithine is bound at residue V300.

This sequence belongs to the ornithine cyclodeaminase/mu-crystallin family. NAD(+) serves as cofactor.

The enzyme catalyses L-ornithine = L-proline + NH4(+). Its pathway is amino-acid biosynthesis; L-proline biosynthesis; L-proline from L-ornithine: step 1/1. Functionally, catalyzes the conversion of L-ornithine into L-proline with release of ammonia. This chain is Ornithine cyclodeaminase, found in Brucella suis biovar 1 (strain 1330).